The primary structure comprises 415 residues: Isocitrate dehydrogenase [NADP] (415 aa).

NADP(+)-binding positions include 77-79 and Arg-84; that span reads TIT. Thr-79 serves as a coordination point for substrate. Substrate contacts are provided by residues 96-102, Arg-111, and Arg-134; that span reads SPNGTIR. Asp-254 provides a ligand contact to Mn(2+). An NADP(+)-binding site is contributed by Lys-262. Residue Asp-277 participates in Mn(2+) binding. NADP(+)-binding positions include 312–317 and Asn-330; that span reads GTVTRH.

Belongs to the isocitrate and isopropylmalate dehydrogenases family. As to quaternary structure, heterodimer. Mg(2+) is required as a cofactor. It depends on Mn(2+) as a cofactor.

It localises to the cytoplasm. It catalyses the reaction D-threo-isocitrate + NADP(+) = 2-oxoglutarate + CO2 + NADPH. In terms of biological role, may supply 2-oxoglutarate for amino acid biosynthesis and ammonia assimilation via the glutamine synthetase/glutamate synthase (GS/GOGAT) pathway. The protein is Isocitrate dehydrogenase [NADP] of Nicotiana tabacum (Common tobacco).